A 110-amino-acid chain; its full sequence is UPF0213 protein DP2720 (110 aa).

Positions 12-88 (PAWFVYIVQC…KQLSPTRKRT (77 aa)) constitute a GIY-YIG domain.

This sequence belongs to the UPF0213 family.

This chain is UPF0213 protein DP2720, found in Desulfotalea psychrophila (strain LSv54 / DSM 12343).